Here is a 132-residue protein sequence, read N- to C-terminus: Agouti-signaling protein (132 aa).

Positions 1–22 (MDVTRLLLATLLVFLCFFTAYS) are cleaved as a signal peptide. N39 carries N-linked (GlcNAc...) asparagine glycosylation. The tract at residues 61–87 (QISRKEAEKKRSSKKEASMKKVARPRT) is disordered. The segment covering 63–79 (SRKEAEKKRSSKKEASM) has biased composition (basic and acidic residues). 5 disulfides stabilise this stretch: C93/C108, C100/C114, C107/C125, C111/C132, and C116/C123. In terms of domain architecture, Agouti spans 93 to 132 (CVATRDSCKSPAPACCDPCASCQCRFFRSACSCRVLSLNC).

It localises to the secreted. Involved in the regulation of melanogenesis. The binding of ASP to MC1R precludes alpha-MSH initiated signaling and thus blocks production of cAMP, leading to a down-regulation of eumelanogenesis (brown/black pigment) and thus increasing synthesis of pheomelanin (yellow/red pigment). The sequence is that of Agouti-signaling protein (ASIP) from Macaca nigra (Celebes black macaque).